A 122-amino-acid chain; its full sequence is Large ribosomal subunit protein uL14 (122 aa).

Belongs to the universal ribosomal protein uL14 family. Part of the 50S ribosomal subunit. Forms a cluster with proteins L3 and L19. In the 70S ribosome, L14 and L19 interact and together make contacts with the 16S rRNA in bridges B5 and B8.

In terms of biological role, binds to 23S rRNA. Forms part of two intersubunit bridges in the 70S ribosome. The chain is Large ribosomal subunit protein uL14 from Paenarthrobacter aurescens (strain TC1).